Reading from the N-terminus, the 1025-residue chain is Leucyl-cystinyl aminopeptidase (1025 aa).

The residue at position 1 (Met1) is an N-acetylmethionine. The Cytoplasmic portion of the chain corresponds to 1-109 (METFTNDRLQ…DGTCSVPSAR (109 aa)). The Dileucine internalization motif motif lies at 53–54 (LL). At Tyr70 the chain carries Phosphotyrosine. A Dileucine internalization motif motif is present at residues 76–77 (LL). 2 positions are modified to phosphoserine; by PKC/PRKCZ; in vitro: Ser80 and Ser91. The interval 96 to 101 (RQSPDG) is tankyrase binding. Residues 110–131 (TLVICVFVIVVAVSVIMVIYLL) form a helical; Signal-anchor for type II membrane protein membrane-spanning segment. Over 132-1025 (PRCTFTKEGC…RNLKTLTLWL (894 aa)) the chain is Extracellular. Residues Asn145, Asn184, Asn215, Asn256, and Asn266 are each glycosylated (N-linked (GlcNAc...) asparagine). Glu295 contributes to the substrate binding site. N-linked (GlcNAc...) asparagine glycans are attached at residues Asn368 and Asn374. 428 to 432 (GAMEN) is a binding site for substrate. Asn447 carries N-linked (GlcNAc...) asparagine glycosylation. His464 is a Zn(2+) binding site. The active-site Proton acceptor is Glu465. 2 residues coordinate Zn(2+): His468 and Glu487. 9 N-linked (GlcNAc...) asparagine glycosylation sites follow: Asn525, Asn578, Asn664, Asn682, Asn695, Asn758, Asn834, Asn850, and Asn989.

Belongs to the peptidase M1 family. Homodimer. Binds tankyrases 1 and 2. The cofactor is Zn(2+). Post-translationally, N-glycosylated. As to expression, highly expressed in heart, brain, spleen, lung, kidney and white adipose tissue. Detected at lower levels in skeletal muscle and liver.

The protein localises to the cell membrane. The protein resides in the endomembrane system. The catalysed reaction is Release of an N-terminal amino acid, Cys-|-Xaa-, in which the half-cystine residue is involved in a disulfide loop, notably in oxytocin or vasopressin. Hydrolysis rates on a range of aminoacyl arylamides exceed that for the cystinyl derivative, however.. In terms of biological role, release of an N-terminal amino acid, cleave before cysteine, leucine as well as other amino acids. Degrades peptide hormones such as oxytocin, vasopressin and angiotensin III, and plays a role in maintaining homeostasis during pregnancy. May be involved in the inactivation of neuronal peptides in the brain. Cleaves Met-enkephalin and dynorphin. Binds angiotensin IV and may be the angiotensin IV receptor in the brain. The protein is Leucyl-cystinyl aminopeptidase (Lnpep) of Rattus norvegicus (Rat).